The sequence spans 429 residues: Histidine--tRNA ligase (429 aa).

Belongs to the class-II aminoacyl-tRNA synthetase family. As to quaternary structure, homodimer.

It localises to the cytoplasm. The enzyme catalyses tRNA(His) + L-histidine + ATP = L-histidyl-tRNA(His) + AMP + diphosphate + H(+). In Pelodictyon phaeoclathratiforme (strain DSM 5477 / BU-1), this protein is Histidine--tRNA ligase.